We begin with the raw amino-acid sequence, 193 residues long: Zinc finger protein AZF3 (193 aa).

2 C2H2-type zinc fingers span residues 75 to 97 (YKCG…KASH) and 118 to 140 (HVCS…KRCH).

In terms of tissue distribution, expressed in roots.

It localises to the nucleus. In terms of biological role, transcriptional repressor probably involved in abiotic stress responses. Binds DNA in a sequence-specific manner and can repress the transactivation activity of other transcription factors. This is Zinc finger protein AZF3 (AZF3) from Arabidopsis thaliana (Mouse-ear cress).